The primary structure comprises 223 residues: Ribonuclease 3 (223 aa).

Residues 4 to 127 (LENLQKLLGY…VMGAVYLEAG (124 aa)) form the RNase III domain. Residue E40 participates in Mg(2+) binding. D44 is an active-site residue. Mg(2+) is bound by residues D113 and E116. E116 is a catalytic residue. Residues 154-223 (DYKTALQEIT…AKIALEKMKK (70 aa)) enclose the DRBM domain.

The protein belongs to the ribonuclease III family. As to quaternary structure, homodimer. The cofactor is Mg(2+).

Its subcellular location is the cytoplasm. The catalysed reaction is Endonucleolytic cleavage to 5'-phosphomonoester.. Functionally, digests double-stranded RNA. Involved in the processing of primary rRNA transcript to yield the immediate precursors to the large and small rRNAs (23S and 16S). Processes some mRNAs, and tRNAs when they are encoded in the rRNA operon. Processes pre-crRNA and tracrRNA of type II CRISPR loci if present in the organism. In Campylobacter curvus (strain 525.92), this protein is Ribonuclease 3.